The chain runs to 604 residues: Glutamine--fructose-6-phosphate aminotransferase [isomerizing] (604 aa).

The active-site Nucleophile; for GATase activity is C2. The 217-residue stretch at C2 to D218 folds into the Glutamine amidotransferase type-2 domain. 2 consecutive SIS domains span residues I284–K423 and V456–P594. K599 acts as the For Fru-6P isomerization activity in catalysis.

As to quaternary structure, homodimer.

It is found in the cytoplasm. It catalyses the reaction D-fructose 6-phosphate + L-glutamine = D-glucosamine 6-phosphate + L-glutamate. Functionally, catalyzes the first step in hexosamine metabolism, converting fructose-6P into glucosamine-6P using glutamine as a nitrogen source. In Streptococcus pyogenes serotype M1, this protein is Glutamine--fructose-6-phosphate aminotransferase [isomerizing].